A 286-amino-acid chain; its full sequence is Pyridoxal kinase PdxY (286 aa).

Substrate-binding positions include Ser9 and 44–45 (TQ). ATP-binding positions include Asp111, Ala143, Glu148, Lys181, and 208–211 (RPLV). Residue Asp223 coordinates substrate.

It belongs to the pyridoxine kinase family. PdxY subfamily. Homodimer. Mg(2+) serves as cofactor.

It carries out the reaction pyridoxal + ATP = pyridoxal 5'-phosphate + ADP + H(+). Its pathway is cofactor metabolism; pyridoxal 5'-phosphate salvage; pyridoxal 5'-phosphate from pyridoxal: step 1/1. Functionally, pyridoxal kinase involved in the salvage pathway of pyridoxal 5'-phosphate (PLP). Catalyzes the phosphorylation of pyridoxal to PLP. In Salmonella choleraesuis (strain SC-B67), this protein is Pyridoxal kinase PdxY.